The chain runs to 425 residues: Serine--tRNA ligase (425 aa).

233–235 (TAE) is an L-serine binding site. ATP is bound at residue 264 to 266 (RRE). E287 serves as a coordination point for L-serine. Residue 351–354 (EISS) participates in ATP binding. S387 contacts L-serine.

The protein belongs to the class-II aminoacyl-tRNA synthetase family. Type-1 seryl-tRNA synthetase subfamily. As to quaternary structure, homodimer. The tRNA molecule binds across the dimer.

The protein localises to the cytoplasm. It carries out the reaction tRNA(Ser) + L-serine + ATP = L-seryl-tRNA(Ser) + AMP + diphosphate + H(+). The catalysed reaction is tRNA(Sec) + L-serine + ATP = L-seryl-tRNA(Sec) + AMP + diphosphate + H(+). It participates in aminoacyl-tRNA biosynthesis; selenocysteinyl-tRNA(Sec) biosynthesis; L-seryl-tRNA(Sec) from L-serine and tRNA(Sec): step 1/1. In terms of biological role, catalyzes the attachment of serine to tRNA(Ser). Is also able to aminoacylate tRNA(Sec) with serine, to form the misacylated tRNA L-seryl-tRNA(Sec), which will be further converted into selenocysteinyl-tRNA(Sec). In Thermotoga petrophila (strain ATCC BAA-488 / DSM 13995 / JCM 10881 / RKU-1), this protein is Serine--tRNA ligase.